A 154-amino-acid chain; its full sequence is Proline dehydrogenase transcriptional activator (154 aa).

Positions 5 to 66 (IDATDRRILH…MLSPIRLGLI (62 aa)) constitute an HTH asnC-type domain. Positions 24-43 (VTELARKVGLSKTPVAARIR) form a DNA-binding region, H-T-H motif.

Functionally, transcriptional activator of the putA gene in response to proline. The chain is Proline dehydrogenase transcriptional activator (putR) from Rhodobacter capsulatus (Rhodopseudomonas capsulata).